The following is a 490-amino-acid chain: UDP-N-acetylmuramoyl-L-alanyl-D-glutamate--2,6-diaminopimelate ligase (490 aa).

UDP-N-acetyl-alpha-D-muramoyl-L-alanyl-D-glutamate contacts are provided by residues L22, S24, and 39–41; that span reads HQT. Residue 111–117 participates in ATP binding; that stretch reads GTNGKTT. UDP-N-acetyl-alpha-D-muramoyl-L-alanyl-D-glutamate-binding positions include N152, 153 to 154, S180, Q186, and R188; that span reads TT. K220 carries the post-translational modification N6-carboxylysine. Residues R385, 409–412, G460, and E464 each bind meso-2,6-diaminopimelate; that span reads DNPR. The short motif at 409–412 is the Meso-diaminopimelate recognition motif element; that stretch reads DNPR.

Belongs to the MurCDEF family. MurE subfamily. Mg(2+) serves as cofactor. Post-translationally, carboxylation is probably crucial for Mg(2+) binding and, consequently, for the gamma-phosphate positioning of ATP.

It is found in the cytoplasm. It catalyses the reaction UDP-N-acetyl-alpha-D-muramoyl-L-alanyl-D-glutamate + meso-2,6-diaminopimelate + ATP = UDP-N-acetyl-alpha-D-muramoyl-L-alanyl-gamma-D-glutamyl-meso-2,6-diaminopimelate + ADP + phosphate + H(+). The protein operates within cell wall biogenesis; peptidoglycan biosynthesis. Its function is as follows. Catalyzes the addition of meso-diaminopimelic acid to the nucleotide precursor UDP-N-acetylmuramoyl-L-alanyl-D-glutamate (UMAG) in the biosynthesis of bacterial cell-wall peptidoglycan. The polypeptide is UDP-N-acetylmuramoyl-L-alanyl-D-glutamate--2,6-diaminopimelate ligase (Yersinia pestis).